A 366-amino-acid chain; its full sequence is Beta sliding clamp (366 aa).

Belongs to the beta sliding clamp family. Forms a ring-shaped head-to-tail homodimer around DNA which binds and tethers DNA polymerases and other proteins to the DNA. The DNA replisome complex has a single clamp-loading complex (3 tau and 1 each of delta, delta', psi and chi subunits) which binds 3 Pol III cores (1 core on the leading strand and 2 on the lagging strand) each with a beta sliding clamp dimer. Additional proteins in the replisome are other copies of gamma, psi and chi, Ssb, DNA helicase and RNA primase.

The protein resides in the cytoplasm. Its function is as follows. Confers DNA tethering and processivity to DNA polymerases and other proteins. Acts as a clamp, forming a ring around DNA (a reaction catalyzed by the clamp-loading complex) which diffuses in an ATP-independent manner freely and bidirectionally along dsDNA. Initially characterized for its ability to contact the catalytic subunit of DNA polymerase III (Pol III), a complex, multichain enzyme responsible for most of the replicative synthesis in bacteria; Pol III exhibits 3'-5' exonuclease proofreading activity. The beta chain is required for initiation of replication as well as for processivity of DNA replication. This chain is Beta sliding clamp (dnaN), found in Chlamydia pneumoniae (Chlamydophila pneumoniae).